We begin with the raw amino-acid sequence, 150 residues long: Putative HTH-type transcriptional regulator HI_0379 (150 aa).

The HTH rrf2-type domain occupies 2–131; it reads KLTSKGRYAV…NEITLAELVN (130 aa).

This chain is Putative HTH-type transcriptional regulator HI_0379, found in Haemophilus influenzae (strain ATCC 51907 / DSM 11121 / KW20 / Rd).